The primary structure comprises 554 residues: Formate--tetrahydrofolate ligase (554 aa).

An ATP-binding site is contributed by 67 to 74 (TPTGEGKT).

This sequence belongs to the formate--tetrahydrofolate ligase family.

It catalyses the reaction (6S)-5,6,7,8-tetrahydrofolate + formate + ATP = (6R)-10-formyltetrahydrofolate + ADP + phosphate. It participates in one-carbon metabolism; tetrahydrofolate interconversion. The chain is Formate--tetrahydrofolate ligase from Finegoldia magna (strain ATCC 29328 / DSM 20472 / WAL 2508) (Peptostreptococcus magnus).